A 152-amino-acid polypeptide reads, in one-letter code: UPF0178 protein YaiI (152 aa).

The protein belongs to the UPF0178 family.

The protein is UPF0178 protein YaiI of Shigella flexneri.